A 553-amino-acid chain; its full sequence is Mothers against decapentaplegic homolog 4 (553 aa).

The interval 1–323 (MDNMSITNTP…PISNHPAPEY (323 aa)) is mediates interaction with ZBTB7A. Residues 18–142 (SIVHSLMCHR…YERVVSPGID (125 aa)) form the MH1 domain. N6-acetyllysine is present on Lys-37. The required for interaction with TSC22D1 stretch occupies residues 44 to 69 (VKKLKEKKDELDSLITAITTNGAHPS). Zn(2+) is bound at residue Cys-71. Lys-113 is covalently cross-linked (Glycyl lysine isopeptide (Lys-Gly) (interchain with G-Cter in SUMO2)). Zn(2+) contacts are provided by Cys-115, Cys-127, and His-132. Residues 168-194 (GQPSLSTEGHSIQTIQHPPSNRASTET) form a disordered region. Residues 170 to 194 (PSLSTEGHSIQTIQHPPSNRASTET) are compositionally biased toward polar residues. Residues 275-321 (PYTPNLPHHQNGHLQHHPPMPPHPGHYWPPVHNELAFQPPISNHPAP) are SAD. One can recognise an MH2 domain in the interval 324-553 (WCSIAYFEMD…MPIADPQPLD (230 aa)). An N6-acetyllysine mark is found at Lys-429 and Lys-508. Residue Lys-520 forms a Glycyl lysine isopeptide (Lys-Gly) (interchain with G-Cter in ubiquitin) linkage.

It belongs to the dwarfin/SMAD family. Monomer; in the absence of TGF-beta activation. Heterotrimer; on TGF-beta activation. Heterotrimer composed of two molecules of a C-terminally phosphorylated R-SMAD molecule, SMAD2 or SMAD3, and one molecule of SMAD4 to form the transcriptional active SMAD2/SMAD3-SMAD4 complex. Found in a ternary complex composed of SMAD4, STK11/LKB1 and STK11IP. Found in a complex with SMAD1 and YY1. Identified in a complex that contains at least ZNF451, SMAD2, SMAD3 and SMAD4. Interacts with ATF2, COPS5, DACH1, MSG1, SKI, STK11/LKB1, STK11IP and TRIM33. Associates with ZNF423 or ZNF521 in response to BMP2 leading to activate transcription of BMP target genes. Interacts with USP9X. Interacts with RBPMS. Interacts with WWTR1 (via coiled-coil domain). Interacts with CITED1 and CITED2. Interacts with PDPK1 (via PH domain). Interacts with VPS39; this interaction affects heterodimer formation with SMAD3, but not with SMAD2, and leads to inhibition of SMAD3-dependent transcription activation. Interactions with VPS39 and SMAD2 may be mutually exclusive. Interacts (via MH2 domain) with ZNF451 (via N-terminal zinc-finger domains). Interacts with ZC3H3. Interacts weakly with ZNF8. Interacts with NUP93 and IPO7; translocates SMAD4 to the nucleus through the NPC upon BMP7 stimulation resulting in activation of SMAD4 signaling. Interacts with CREB3L1, the interaction takes place upon TGFB1 induction and SMAD4 acts as a CREB3L1 coactivator to induce the expression of genes involved in the assembly of collagen extracellular matrix. Interacts with DLX1. Interacts with ZBTB7A; the interaction is direct and stimulated by TGFB1. Interacts with CREBBP; the recruitment of this transcriptional coactivator is negatively regulated by ZBTB7A. Interacts with EP300; the interaction with this transcriptional coactivator is negatively regulated by ZBTB7A. Interacts with HDAC1. Interacts (via MH2 domain) with ZMIZ1 (via SP-RING-type domain); in the TGF-beta signaling pathway increases the activity of the SMAD3/SMAD4 transcriptional complex. Interacts (via N-terminus) with TSC22D1. In terms of processing, monoubiquitinated on Lys-520 by E3 ubiquitin-protein ligase TRIM33. Monoubiquitination hampers its ability to form a stable complex with activated SMAD2/3 resulting in inhibition of TGF-beta/BMP signaling cascade. Phosphorylated by PDPK1.

It is found in the cytoplasm. Its subcellular location is the nucleus. In terms of biological role, common SMAD (co-SMAD) is the coactivator and mediator of signal transduction by TGF-beta (transforming growth factor). Component of the heterotrimeric SMAD2/SMAD3-SMAD4 complex that forms in the nucleus and is required for the TGF-mediated signaling. Promotes binding of the SMAD2/SMAD4/FAST-1 complex to DNA and provides an activation function required for SMAD1 or SMAD2 to stimulate transcription. Component of the multimeric SMAD3/SMAD4/JUN/FOS complex which forms at the AP1 promoter site; required for synergistic transcriptional activity in response to TGF-beta. Acts synergistically with SMAD1 and YY1 in bone morphogenetic protein (BMP)-mediated cardiac-specific gene expression. Binds to SMAD binding elements (SBEs) (5'-GTCT/AGAC-3') within BMP response element (BMPRE) of cardiac activating regions. May act as a tumor suppressor. Positively regulates PDPK1 kinase activity by stimulating its dissociation from the 14-3-3 protein YWHAQ which acts as a negative regulator. In muscle physiology, plays a central role in the balance between atrophy and hypertrophy. When recruited by MSTN, promotes atrophy response via phosphorylated SMAD2/4. MSTN decrease causes SMAD4 release and subsequent recruitment by the BMP pathway to promote hypertrophy via phosphorylated SMAD1/5/8. This is Mothers against decapentaplegic homolog 4 (SMAD4) from Bos taurus (Bovine).